We begin with the raw amino-acid sequence, 654 residues long: Protein fem-1 homolog A-like (654 aa).

ANK repeat units follow at residues 2–31, 40–70, 82–111, 115–145, 149–178, 182–211, and 214–243; these read DLHT…REEL, GGGT…SVEA, EGAP…SVNR, TNST…DLEV, HGHT…QVNR, KGNT…RMER, and YGMT…SHEQ. Ser-108 carries the post-translational modification Phosphoserine. A disordered region spans residues 241–265; it reads HEQLSGTELPGEGSSQMAGNHCSTP. The segment covering 253 to 263 has biased composition (polar residues); sequence GSSQMAGNHCS. TPR repeat units lie at residues 283–317 and 375–408; these read VEAL…RHQG and SYYI…QQNN. ANK repeat units lie at residues 519–561 and 565–594; these read NGFT…DPDS and DNNS…HMDA. Residue Ser-608 is modified to Phosphoserine.

This sequence belongs to the fem-1 family. In terms of assembly, component of a CRL2 E3 ubiquitin-protein ligase complex, also named ECS (Elongin BC-CUL2/5-SOCS-box protein) complex, composed of CUL2, Elongin BC (ELOB and ELOC), RBX1 and substrate-specific adapter FEM1A.

It localises to the mitochondrion. The protein localises to the cytoplasm. The protein operates within protein modification; protein ubiquitination. Its function is as follows. Substrate-recognition component of a Cul2-RING (CRL2) E3 ubiquitin-protein ligase complex of the DesCEND (destruction via C-end degrons) pathway, which recognizes a C-degron located at the extreme C terminus of target proteins, leading to their ubiquitination and degradation. The C-degron recognized by the DesCEND pathway is usually a motif of less than ten residues and can be present in full-length proteins, truncated proteins or proteolytically cleaved forms. The CRL2(FEM1A) complex specifically recognizes proteins with an arginine at the C-terminus: recognizes and binds proteins ending with -Lys/Arg-Xaa-Arg and -Lys/Arg-Xaa-Xaa-Arg C-degrons, such as SIL1 or OR51B2, leading to their ubiquitination and degradation. This is Protein fem-1 homolog A-like from Mus musculus (Mouse).